Consider the following 390-residue polypeptide: Elongation factor Ts 2, mitochondrial (390 aa).

A mitochondrion-targeting transit peptide spans 1 to 24; it reads MMIFSTAVLRLCATSRIGAVTKRA. A compositionally biased stretch (low complexity) spans 30–40; that stretch reads SSASSSSSSSS. Residues 30-54 form a disordered region; it reads SSASSSSSSSSPTQSMPPQRYTHHQ.

It belongs to the EF-Ts family.

Its subcellular location is the mitochondrion. Functionally, associates with the EF-Tu.GDP complex and induces the exchange of GDP to GTP. It remains bound to the aminoacyl-tRNA.EF-Tu.GTP complex up to the GTP hydrolysis stage on the ribosome. The polypeptide is Elongation factor Ts 2, mitochondrial (Thalassiosira pseudonana (Marine diatom)).